An 880-amino-acid chain; its full sequence is Tyrosine-protein kinase receptor TYRO3 (880 aa).

Positions 1–30 (MALRRSMGRPGLRPLLLAGLASLLLPGSAA) are cleaved as a signal peptide. Ig-like C2-type domains are found at residues 31–118 (AGLK…TKIS) and 129–210 (PFFT…AIIR). Over 31–419 (AGLKLMGAPV…QGPPHSRTSW (389 aa)) the chain is Extracellular. N-linked (GlcNAc...) asparagine glycosylation is found at Asn-53, Asn-75, Asn-181, Asn-220, Asn-230, Asn-283, Asn-356, and Asn-370. Intrachain disulfides connect Cys-54–Cys-107 and Cys-150–Cys-193. 2 Fibronectin type-III domains span residues 217–310 (APFN…TKGL) and 315–406 (APQN…SHDH). A helical transmembrane segment spans residues 420–440 (VPVVLGVLTALITAAALALIL). The Cytoplasmic portion of the chain corresponds to 441–880 (LRKRRKETRF…QQGLLPHSSC (440 aa)). Ser-456 carries the phosphoserine modification. The Protein kinase domain maps to 508–785 (FTLGRMLGKG…LENILGHLSV (278 aa)). ATP contacts are provided by residues 514–522 (LGKGEFGSV) and Lys-540. Catalysis depends on Asp-645, which acts as the Proton acceptor. Residues Tyr-671, Tyr-675, Tyr-676, and Tyr-794 each carry the phosphotyrosine; by autocatalysis modification. 2 disordered regions span residues 804 to 827 (AENGSPELPCGEQSSSEAGDGSGM) and 842 to 864 (SPGGLAESPGQLEQQPESPLNEN). Ser-808 and Ser-859 each carry phosphoserine. The span at 852-864 (QLEQQPESPLNEN) shows a compositional bias: polar residues.

It belongs to the protein kinase superfamily. Tyr protein kinase family. AXL/UFO subfamily. In terms of assembly, monomer and homodimer. Interacts (via N-terminus) with extracellular ligands TULP1 and GAS6. Interacts with PIK3R1; this interaction increases PI3-kinase activity. Post-translationally, autophosphorylated. As to expression, abundant in the brain and lower levels in other tissues.

The protein localises to the cell membrane. It carries out the reaction L-tyrosyl-[protein] + ATP = O-phospho-L-tyrosyl-[protein] + ADP + H(+). In terms of biological role, receptor tyrosine kinase that transduces signals from the extracellular matrix into the cytoplasm by binding to several ligands including TULP1 or GAS6. Regulates many physiological processes including cell survival, migration and differentiation. Ligand binding at the cell surface induces dimerization and autophosphorylation of TYRO3 on its intracellular domain that provides docking sites for downstream signaling molecules. Following activation by ligand, interacts with PIK3R1 and thereby enhances PI3-kinase activity. Activates the AKT survival pathway, including nuclear translocation of NF-kappa-B and up-regulation of transcription of NF-kappa-B-regulated genes. TYRO3 signaling plays a role in various processes such as neuron protection from excitotoxic injury, platelet aggregation and cytoskeleton reorganization. Also plays an important role in inhibition of Toll-like receptors (TLRs)-mediated innate immune response by activating STAT1, which selectively induces production of suppressors of cytokine signaling SOCS1 and SOCS3. In Rattus norvegicus (Rat), this protein is Tyrosine-protein kinase receptor TYRO3 (Tyro3).